Reading from the N-terminus, the 61-residue chain is Weak toxin CM-2a (61 aa).

4 cysteine pairs are disulfide-bonded: C3–C19, C12–C37, C41–C49, and C50–C55.

The protein belongs to the three-finger toxin family. Short-chain subfamily. Orphan group XX sub-subfamily. Expressed by the venom gland.

The protein localises to the secreted. This is Weak toxin CM-2a from Naja annulifera (Banded Egyptian cobra).